Consider the following 81-residue polypeptide: MSTSAQPARRPFFRRRKTCPFSGANAPKIDYKDVKLLQRYISERGKIVPSRITAVSAKKQRELARAIKRARFLALIPYVIS.

The protein belongs to the bacterial ribosomal protein bS18 family. Part of the 30S ribosomal subunit. Forms a tight heterodimer with protein bS6.

Its function is as follows. Binds as a heterodimer with protein bS6 to the central domain of the 16S rRNA, where it helps stabilize the platform of the 30S subunit. The protein is Small ribosomal subunit protein bS18 of Parvibaculum lavamentivorans (strain DS-1 / DSM 13023 / NCIMB 13966).